The sequence spans 537 residues: Tyrosine-protein kinase Fyn (537 aa).

Glycine 2 carries N-myristoyl glycine lipidation. S-palmitoyl cysteine attachment occurs at residues cysteine 3 and cysteine 6. A Phosphothreonine; by PKC modification is found at threonine 12. Positions 82–143 (TGVTLFVALY…PSNYVAPVDS (62 aa)) constitute an SH3 domain. The 98-residue stretch at 149-246 (WYFGKLGRKD…GLCCRLVVPC (98 aa)) folds into the SH2 domain. The region spanning 271–524 (LQLIKRLGNG…YLQAFLEDYF (254 aa)) is the Protein kinase domain. Residues 277–285 (LGNGQFGEV) and lysine 299 each bind ATP. Aspartate 390 (proton acceptor) is an active-site residue. Position 420 is a phosphotyrosine; by autocatalysis (tyrosine 420). Tyrosine 531 carries the phosphotyrosine modification.

This sequence belongs to the protein kinase superfamily. Tyr protein kinase family. SRC subfamily. As to quaternary structure, associates through its SH3 domain, to the p85 subunit of phosphatidylinositol 3-kinase. Requires Mn(2+) as cofactor.

It catalyses the reaction L-tyrosyl-[protein] + ATP = O-phospho-L-tyrosyl-[protein] + ADP + H(+). With respect to regulation, inhibited by phosphorylation of Tyr-531 by leukocyte common antigen and activated by dephosphorylation of this site. Its function is as follows. Tyrosine-protein kinase implicated in the control of cell growth. Plays a role in the regulation of intracellular calcium levels. Required in brain development and mature brain function with important roles in the regulation of axon growth, axon guidance, and neurite extension. This Xiphophorus hellerii (Green swordtail) protein is Tyrosine-protein kinase Fyn (fyn).